The sequence spans 585 residues: Conglutin alpha 3 (585 aa).

A signal peptide spans 1–23 (MANPFLLSLSLCLVLLYTSACLG). 2 cysteine pairs are disulfide-bonded: Cys-32–Cys-65 and Cys-108–Cys-406. In terms of domain architecture, Cupin type-1 1 spans 37 to 258 (LNALEPDNRI…ALNIDEDTVH (222 aa)). 3 disordered regions span residues 113–147 (EEAQQSQSRQERRRGQRSQSQEQEDSHQKIRHFRE), 199–240 (EEYP…ILSG), and 283–402 (KWQE…NGLE). Over residues 136 to 147 (EDSHQKIRHFRE) the composition is skewed to basic and acidic residues. A compositionally biased stretch (basic residues) spans 211–224 (RQQHQRPSGRRHGQ). A compositionally biased stretch (acidic residues) spans 309–320 (REEEEKEEEDEP). Positions 338 to 350 (ERGRGRGGSEWKR) are enriched in basic and acidic residues. Positions 412–558 (ENIADPTRAD…AFRLSLNQVS (147 aa)) constitute a Cupin type-1 2 domain. Over residues 565–579 (NHNPLVTPQSQSQDH) the composition is skewed to polar residues. Residues 565–585 (NHNPLVTPQSQSQDHNLVKVA) form a disordered region.

Belongs to the 11S seed storage protein (globulins) family. In terms of assembly, hexamer; each subunit is composed of an acidic and a basic chain derived from a single precursor and linked by a disulfide bond. Component of globulins complexes which accumulate in seeds.

In terms of biological role, sulfur-rich seed storage protein. This protein found in the seeds of many leguminous and non-leguminous plants is the source of sulfur-containing amino acids in seed meals. The protein is Conglutin alpha 3 of Lupinus angustifolius (Narrow-leaved blue lupine).